Here is a 273-residue protein sequence, read N- to C-terminus: Putative pyruvate, phosphate dikinase regulatory protein (273 aa).

Residue 153 to 160 (GISRTSKT) participates in ADP binding.

Belongs to the pyruvate, phosphate/water dikinase regulatory protein family. PDRP subfamily.

It carries out the reaction N(tele)-phospho-L-histidyl/L-threonyl-[pyruvate, phosphate dikinase] + ADP = N(tele)-phospho-L-histidyl/O-phospho-L-threonyl-[pyruvate, phosphate dikinase] + AMP + H(+). The catalysed reaction is N(tele)-phospho-L-histidyl/O-phospho-L-threonyl-[pyruvate, phosphate dikinase] + phosphate + H(+) = N(tele)-phospho-L-histidyl/L-threonyl-[pyruvate, phosphate dikinase] + diphosphate. Functionally, bifunctional serine/threonine kinase and phosphorylase involved in the regulation of the pyruvate, phosphate dikinase (PPDK) by catalyzing its phosphorylation/dephosphorylation. This is Putative pyruvate, phosphate dikinase regulatory protein from Agrobacterium fabrum (strain C58 / ATCC 33970) (Agrobacterium tumefaciens (strain C58)).